A 435-amino-acid chain; its full sequence is Oocyte zinc finger protein XlCOF22 (435 aa).

The disordered stretch occupies residues 71–92 (NANTSAHFSRNRDSDKHERTHT). Residues 80–91 (RNRDSDKHERTH) show a composition bias toward basic and acidic residues. C2H2-type zinc fingers lie at residues 97 to 120 (HSCS…RQSH), 126 to 148 (FSCS…QRTH), 154 to 176 (FCCF…RRTH), 182 to 204 (FSCL…QRTH), 210 to 232 (FSCL…QRTH), 238 to 260 (FSCL…QRTH), 266 to 288 (FSCF…QRTH), 294 to 316 (FSCS…QRTH), 322 to 345 (YSCS…RRTH), 351 to 373 (FSCS…QRTH), 379 to 402 (FSCS…RQTH), and 408 to 430 (VSCS…FKIH).

This sequence belongs to the krueppel C2H2-type zinc-finger protein family.

The protein resides in the nucleus. Functionally, may be involved in transcriptional regulation. This Xenopus laevis (African clawed frog) protein is Oocyte zinc finger protein XlCOF22.